The chain runs to 136 residues: S-protein homolog 25 (136 aa).

Residues 1-20 (MNHSVFVILITITYFGLNQA) form the signal peptide. 2 N-linked (GlcNAc...) asparagine glycosylation sites follow: Asn71 and Asn84.

This sequence belongs to the plant self-incompatibility (S1) protein family.

The protein localises to the secreted. The chain is S-protein homolog 25 from Arabidopsis thaliana (Mouse-ear cress).